Consider the following 126-residue polypeptide: DNA-directed RNA polymerase I subunit RPA12 (126 aa).

Zn(2+)-binding residues include C20, C23, C38, C41, C87, and C90. The segment at 20–41 adopts a C4-type zinc-finger fold; sequence CSDCGSVLPLPGAQDTVTCTRC. The TFIIS-type zinc finger occupies 83 to 123; the sequence is VDRRCPRCGHEGMAYHTRQMRSADEGQTVFYTCTNCKFQEK. The Hairpin motif lies at 106-107; it reads DE. Zn(2+) contacts are provided by C115 and C118.

The protein belongs to the archaeal RpoM/eukaryotic RPA12/RPB9/RPC11 RNA polymerase family. As to quaternary structure, component of the RNA polymerase I (Pol I) complex consisting of 13 subunits: a ten-subunit catalytic core composed of POLR1A/RPA1, POLR1B/RPA2, POLR1C/RPAC1, POLR1D/RPAC2, POLR1H/RPA12, POLR2E/RPABC1, POLR2F/RPABC2, POLR2H/RPABC3, POLR2K/RPABC4 and POLR2L/RPABC5; a mobile stalk subunit POLR1F/RPA43 protruding from the core and additional subunits homologous to general transcription factors POLR1E/RPA49 and POLR1G/RPA34. Part of Pol I pre-initiation complex (PIC), in which Pol I core assembles with RRN3 and promoter-bound UTBF and SL1/TIF-IB complex.

The protein resides in the nucleus. The protein localises to the nucleolus. Its function is as follows. Core component of RNA polymerase I (Pol I), a DNA-dependent RNA polymerase which synthesizes ribosomal RNA precursors using the four ribonucleoside triphosphates as substrates. Can mediate Pol I proofreading of the nascent RNA transcript. Anchors into the Pol I active site to monitor transcription fidelity and cleave mis-incorporated 5'-ribonucleotides. This Macaca mulatta (Rhesus macaque) protein is DNA-directed RNA polymerase I subunit RPA12.